A 604-amino-acid chain; its full sequence is Acetylcholinesterase 4 (604 aa).

Residues 1 to 23 (MKPKLVFLPFLIFITVFIEESEA) form the signal peptide. Cysteine 88 and cysteine 115 form a disulfide bridge. Residues asparagine 96 and asparagine 128 are each glycosylated (N-linked (GlcNAc...) asparagine). Serine 219 (acyl-ester intermediate) is an active-site residue. Cysteines 273 and 284 form a disulfide. N-linked (GlcNAc...) asparagine glycans are attached at residues asparagine 274 and asparagine 299. Catalysis depends on glutamate 347, which acts as the Charge relay system. 2 N-linked (GlcNAc...) asparagine glycosylation sites follow: asparagine 400 and asparagine 446. Residues cysteine 426 and cysteine 561 are joined by a disulfide bond. Residue histidine 477 is the Charge relay system of the active site.

This sequence belongs to the type-B carboxylesterase/lipase family.

The protein resides in the synapse. It is found in the secreted. The protein localises to the cell membrane. It carries out the reaction acetylcholine + H2O = choline + acetate + H(+). In terms of biological role, rapidly hydrolyzes choline released into the synapse. The chain is Acetylcholinesterase 4 (ace-4) from Caenorhabditis briggsae.